The sequence spans 201 residues: NAD(P)H dehydrogenase (quinone) (201 aa).

A Flavodoxin-like domain is found at 4-191 (VLVLYYSMYG…KIAKCQGVHV (188 aa)). Residues 10 to 15 (SMYGHV) and 79 to 81 (TRF) each bind FMN. Position 12 (tyrosine 12) interacts with NAD(+). Tryptophan 99 contacts substrate. Residues 114–120 (STGTQHG) and histidine 135 contribute to the FMN site.

Belongs to the WrbA family. The cofactor is FMN.

The enzyme catalyses a quinone + NADH + H(+) = a quinol + NAD(+). It catalyses the reaction a quinone + NADPH + H(+) = a quinol + NADP(+). This chain is NAD(P)H dehydrogenase (quinone), found in Hydrogenovibrio crunogenus (strain DSM 25203 / XCL-2) (Thiomicrospira crunogena).